Here is a 134-residue protein sequence, read N- to C-terminus: Profilin-3 (134 aa).

C13 and C118 are joined by a disulfide. The Involved in PIP2 interaction motif lies at 84 to 100 (AVIRGKKGSGGITSKKT). Position 114 is a phosphothreonine (T114).

Belongs to the profilin family. In terms of assembly, occurs in many kinds of cells as a complex with monomeric actin in a 1:1 ratio. Phosphorylated by MAP kinases.

The protein resides in the cytoplasm. It localises to the cytoskeleton. Its function is as follows. Binds to actin and affects the structure of the cytoskeleton. At high concentrations, profilin prevents the polymerization of actin, whereas it enhances it at low concentrations. This chain is Profilin-3, found in Olea europaea (Common olive).